Here is a 132-residue protein sequence, read N- to C-terminus: L-ectoine synthase (132 aa).

The protein belongs to the ectoine synthase family.

It catalyses the reaction (2S)-4-acetamido-2-aminobutanoate = L-ectoine + H2O. It participates in amine and polyamine biosynthesis; ectoine biosynthesis; L-ectoine from L-aspartate 4-semialdehyde: step 3/3. In terms of biological role, catalyzes the circularization of gamma-N-acetyl-alpha,gamma-diaminobutyric acid (ADABA) to ectoine (1,4,5,6-tetrahydro-2-methyl-4-pyrimidine carboxylic acid), which is an excellent osmoprotectant. The polypeptide is L-ectoine synthase (Bordetella avium (strain 197N)).